The chain runs to 204 residues: Leucyl/phenylalanyl-tRNA--protein transferase (204 aa).

The protein belongs to the L/F-transferase family.

It localises to the cytoplasm. It catalyses the reaction N-terminal L-lysyl-[protein] + L-leucyl-tRNA(Leu) = N-terminal L-leucyl-L-lysyl-[protein] + tRNA(Leu) + H(+). The catalysed reaction is N-terminal L-arginyl-[protein] + L-leucyl-tRNA(Leu) = N-terminal L-leucyl-L-arginyl-[protein] + tRNA(Leu) + H(+). It carries out the reaction L-phenylalanyl-tRNA(Phe) + an N-terminal L-alpha-aminoacyl-[protein] = an N-terminal L-phenylalanyl-L-alpha-aminoacyl-[protein] + tRNA(Phe). In terms of biological role, functions in the N-end rule pathway of protein degradation where it conjugates Leu, Phe and, less efficiently, Met from aminoacyl-tRNAs to the N-termini of proteins containing an N-terminal arginine or lysine. The polypeptide is Leucyl/phenylalanyl-tRNA--protein transferase (Rhizobium meliloti (strain 1021) (Ensifer meliloti)).